Here is a 1693-residue protein sequence, read N- to C-terminus: MEAHQFIKAHGITTAIEQAALAAANSALANAVVVRPFLSHQQIEILINLMQPRQLVFRPEVFWNHPIQRVIHNELELYCRARSGRCLEIGAHPRSINDNPNVVHRCFLLPVGRDVQRWYTAPTRGPAANCRRSALRGLPAVDRTYCLDGFSGCNFPAETGIALYSLHDMSPSDVAEAMFRHGMTRLYAALHLPPEVLLPPGTYRTASYLLIHDGRRVVVTYEGDTSAGYNHDVSNLRSWIRTTKVTGDHPLVIERVRAIGCHFVLLLTAAPEPSPMPYVPYPRSTEVYVRSIFGPGGTPSLFPTSCSTKSTFHAVPAHIWDRLMLFGATLDDQAFCCSRLMTYLRGISYKVTVGTLVANEGWNASEDALTAVITAAYLTICHQRYLRTQAISKGMRRLEREHAQKFITPLYSWLFEKSGRDYIPGRQLEFYAQCRRWLSAGFHLDPRVLVFDESAPCRCRTAIRKALSKFCCFMKWLGQECTCFLQPAEGVVGDQGHDNEAYEGSDVDPAESAISDISGSYVVPGTALQPLYQALDLPAEIVARAGRLTATVKVSQVDGRIDCETLLGNKTFRTSFVDGAVLEANGPERYNLSFDASQSTMAAGPFSLTYAASAAGLEVRYVAAGLDHRAVFAPGVSPRSAPGEVTAFCSALYRFNREAQRHSLTGNLWFHPEGLIGLFAPFSPGHVWESANPFCGESTLYTRTWSEVDAVSSPARPDLGLMSEPSIPSRAATPTLAVLLPPPAPDPPPPPSAPALDEPASGATAGAPAITHQTARHRRLLFTYPDGSKVFAGSLFESTCTWLVNASNVDHRPGGGLCHAFYQRYPASFDAASFVMRDGAAAYTLTPRPIIHAVAPDYRLEHNPKRLEAAYRETCSRLGTAAYSLLGTGIYQVPIGPSFDAWERNHRPGDELYLPELAARWFEANRPTRPTLTITEDVARTANLAIELDSATDVGRACAGCRVTPGVVQYQFTAGVPGSGKSRSITQADVDVVVVPTRELRNAWRRRGFAAFNPHTAARVTQGRRVVIDEAPSLPPHLLLLHMQRAATVHLLGDPNQIPAIDFEHAGLVPAIRPDLGPTSWWHVTHRCPADVCELIRGAYPMIQTTSRVLRSLFWGEPAVGQKLVFTQAAKAANPGSVTVHEAQGATYTETTIIATADARGLIQSSRAHAIVALTRHTEKFVIIDAPGLLREVGISDAIVNNFFLAGGEIGHQRPSVIPRGNPDANVDTLAAFPPSCQISAFHQLAEELGHRPVPVAAVLPPCPELEQGLLYLPQGLTACDSVVTFELTDIVHCRMAAPNQRKAVLSTLVGRYGRRTKLYNASHSDVRDSLARFIPAIGPVQVTTCELYELVEAMVEKGQDGSAVLELDLCNRDVSRITFFQKDCNKFTTGETIAHGKVGQGISAWSKTFCALFGPWFRAIEKAILALLPQGVFYGDAFDDTVFSAAVAAAKASMVFENDFSEFDSTQNNFSLGLECAIMEECGMPQWLIRLYHLIRSAWILQAPKESLRGFWKKHSGEPGTLLWNTVWNMAVITHCYDFRDFQVAAFKGDDSIVLCSEYRQSPGAAVLIAGCGLKLKVDFRPIGLYAGVVVAPGLGALPDVVRFAGRLTEKNWGPGPERAEQLRLAVSDFLRKLTNVAQMCVDVVSRVYGVSPGLVHNLIGMLQAVADGKAHFTESVKPVLDLTNSILCRVE.

The region spanning 56–240 (VFRPEVFWNH…HDVSNLRSWI (185 aa)) is the Alphavirus-like MT domain. The segment at 60–240 (EVFWNHPIQR…HDVSNLRSWI (181 aa)) is methyltransferase. The Y-domain stretch occupies residues 241–439 (RTTKVTGDHP…FYAQCRRWLS (199 aa)). Cysteines 434 and 481 form a disulfide. The interval 442-509 (FHLDPRVLVF…EAYEGSDVDP (68 aa)) is putative protease. The zinc-binding stretch occupies residues 510–691 (AESAISDISG…FSPGHVWESA (182 aa)). Zn(2+)-binding residues include histidine 671, glutamate 673, and histidine 686. The hinge stretch occupies residues 712–778 (SSPARPDLGL…AITHQTARHR (67 aa)). The disordered stretch occupies residues 737 to 769 (AVLLPPPAPDPPPPPSAPALDEPASGATAGAPA). Residues 740 to 753 (LPPPAPDPPPPPSA) are compositionally biased toward pro residues. Positions 775 to 921 (ARHRRLLFTY…LYLPELAARW (147 aa)) constitute a Macro domain. The segment at 785 to 942 (PDGSKVFAGS…TITEDVARTA (158 aa)) is X-domain. One can recognise a (+)RNA virus helicase ATP-binding domain in the interval 934-1082 (ITEDVARTAN…RPDLGPTSWW (149 aa)). Residues 960–1204 (GCRVTPGVVQ…ISDAIVNNFF (245 aa)) form an NTPase/helicase region. Position 975-982 (975-982 (GVPGSGKS)) interacts with ATP. Residues 1083–1216 (HVTHRCPADV…GGEIGHQRPS (134 aa)) enclose the (+)RNA virus helicase C-terminal domain. The RNA-directed RNA polymerase stretch occupies residues 1207–1693 (GGEIGHQRPS…LTNSILCRVE (487 aa)). Positions 1454-1565 (SMVFENDFSE…LCSEYRQSPG (112 aa)) constitute a RdRp catalytic domain.

Belongs to the hepevirus non-structural polyprotein family. The protease domain interacts with host EIF2AK4 (via C-terminus); this interaction inhibits dimerization of EIF2AK4 and prevents EIF2AK4-mediated phosphorylation of host EIF2A. Mg(2+) serves as cofactor. ORF1 polyprotein does not seem to be processed into distinct enzymatic domains by a viral protease belonging to ORF1, but could be processed by a host serine protease like thrombin.

It localises to the host cytoplasm. The protein localises to the host perinuclear region. It catalyses the reaction RNA(n) + a ribonucleoside 5'-triphosphate = RNA(n+1) + diphosphate. The enzyme catalyses GTP + S-adenosyl-L-methionine = N(7)-methyl-GTP + S-adenosyl-L-homocysteine. Putative protease: Inhibited by chymostatin. Methyltransferase: Displays a capping enzyme activity. This function is necessary since all viral RNAs are synthesized in the cytoplasm, and host capping enzymes are restricted to the nucleus. The enzymatic reaction involves a covalent link between 7-methyl-GMP and the methyltransferase, whereas eukaryotic capping enzymes form a covalent complex only with GMP. Methyltransferase catalyzes transfer of a methyl group from S-adenosylmethionine to GTP and GDP to yield m(7)GTP or m(7)GDP. GDP is a better substrate than GTP. This enzyme also displays guanylyltransferase activity to form a covalent complex, methyltransferase-m(7)GMP, from which 7-methyl-GMP is transferred to the mRNA to create the cap structure. Functionally, Y-domain: Indispensable for virus replication. Its function is as follows. Putative protease: The putative protease domain although necessary for replication of the virus may not be a protease but rather a structural Zn(2+)-binding domain. Inhibits induction of IFN-beta by MDA5 and RIG-I pathways and down-regulates the expression of MDA5. In terms of biological role, NTPase/helicase: Multi-functional protein that exhibits NTPase and RNA unwinding activities. Hydrolyzes all NTPs efficiently and unwinds RNA duplexes containing 5' overhangs. Possesses a sequence independent RNA-5'-triphosphatase (RTPase) activity suggestive of its role in forming viral cap structure. Also participates in viral genome replication, RNA translocation and genome packaging/unpackaging. RNA-directed RNA polymerase: Plays an essential role in the virus replication. Binds to the 3'-end of the genomic RNA to initiate viral replication. The protein is Non-structural polyprotein pORF1 of Hepatitis E virus genotype 1 (isolate Human/Myanmar/HEVNE8L) (HEV-1).